Here is a 103-residue protein sequence, read N- to C-terminus: Large ribosomal subunit protein eL43 (103 aa).

The protein belongs to the eukaryotic ribosomal protein eL43 family.

The protein is Large ribosomal subunit protein eL43 (RPL37A) of Tetrahymena thermophila (strain SB210).